The chain runs to 544 residues: Glucose starvation modulator protein 1 (544 aa).

The segment at residues C20–C48 is a DNA-binding region (zn(2)-C6 fungal-type). A disordered region spans residues K65 to H93. A compositionally biased stretch (low complexity) spans R70–S86. Residues S403–G475 enclose the PAS domain.

Belongs to the ERT1/acuK family.

It localises to the nucleus. Functionally, transcription factor which regulates nonfermentable carbon utilization. The protein is Glucose starvation modulator protein 1 (GSM1) of Debaryomyces hansenii (strain ATCC 36239 / CBS 767 / BCRC 21394 / JCM 1990 / NBRC 0083 / IGC 2968) (Yeast).